A 160-amino-acid polypeptide reads, in one-letter code: Putative lipoprotein YfiB (160 aa).

Residues 1-18 (MIKHLVAPLVFTSLILTG) form the signal peptide. The N-palmitoyl cysteine moiety is linked to residue Cys19. Cys19 is lipidated: S-diacylglycerol cysteine. An OmpA-like domain is found at 43–160 (AGDWSLGLSD…RRVAVVITTP (118 aa)).

Belongs to the outer membrane OOP (TC 1.B.6) superfamily.

It localises to the cell membrane. This chain is Putative lipoprotein YfiB (yfiB), found in Escherichia coli (strain K12).